The primary structure comprises 547 residues: CTP synthase (547 aa).

The segment at 1-265 is amidoligase domain; the sequence is MARFIFITGG…DQAVLDAFQI (265 aa). Ser13 lines the CTP pocket. Ser13 contacts UTP. ATP is bound by residues 14-19 and Asp71; that span reads SLGKGL. Mg(2+)-binding residues include Asp71 and Glu139. Residues 146-148, 186-191, and Lys222 contribute to the CTP site; these read DIE and KTKPTQ. UTP is bound by residues 186 to 191 and Lys222; that span reads KTKPTQ. The Glutamine amidotransferase type-1 domain maps to 291 to 546; the sequence is KIAIVGKYVQ…VRAAKESSRL (256 aa). Gly353 contributes to the L-glutamine binding site. The active-site Nucleophile; for glutamine hydrolysis is Cys380. Residues 381–384, Glu404, and Arg474 contribute to the L-glutamine site; that span reads LGMQ. Residues His519 and Glu521 contribute to the active site.

Belongs to the CTP synthase family. Homotetramer.

The enzyme catalyses UTP + L-glutamine + ATP + H2O = CTP + L-glutamate + ADP + phosphate + 2 H(+). It catalyses the reaction L-glutamine + H2O = L-glutamate + NH4(+). It carries out the reaction UTP + NH4(+) + ATP = CTP + ADP + phosphate + 2 H(+). Its pathway is pyrimidine metabolism; CTP biosynthesis via de novo pathway; CTP from UDP: step 2/2. Allosterically activated by GTP, when glutamine is the substrate; GTP has no effect on the reaction when ammonia is the substrate. The allosteric effector GTP functions by stabilizing the protein conformation that binds the tetrahedral intermediate(s) formed during glutamine hydrolysis. Inhibited by the product CTP, via allosteric rather than competitive inhibition. Functionally, catalyzes the ATP-dependent amination of UTP to CTP with either L-glutamine or ammonia as the source of nitrogen. Regulates intracellular CTP levels through interactions with the four ribonucleotide triphosphates. The polypeptide is CTP synthase (Ruegeria pomeroyi (strain ATCC 700808 / DSM 15171 / DSS-3) (Silicibacter pomeroyi)).